We begin with the raw amino-acid sequence, 115 residues long: Holo-[acyl-carrier-protein] synthase (115 aa).

Residues Asp-6 and Glu-51 each coordinate Mg(2+).

This sequence belongs to the P-Pant transferase superfamily. AcpS family. The cofactor is Mg(2+).

Its subcellular location is the cytoplasm. The catalysed reaction is apo-[ACP] + CoA = holo-[ACP] + adenosine 3',5'-bisphosphate + H(+). Its function is as follows. Transfers the 4'-phosphopantetheine moiety from coenzyme A to a Ser of acyl-carrier-protein. This is Holo-[acyl-carrier-protein] synthase from Campylobacter jejuni (strain RM1221).